Here is a 550-residue protein sequence, read N- to C-terminus: Chaperonin GroEL (550 aa).

ATP contacts are provided by residues 30-33 (TLGP), lysine 51, 87-91 (DGTTT), glycine 415, and aspartate 496.

Belongs to the chaperonin (HSP60) family. As to quaternary structure, forms a cylinder of 14 subunits composed of two heptameric rings stacked back-to-back. Interacts with the co-chaperonin GroES.

It is found in the cytoplasm. The catalysed reaction is ATP + H2O + a folded polypeptide = ADP + phosphate + an unfolded polypeptide.. Functionally, together with its co-chaperonin GroES, plays an essential role in assisting protein folding. The GroEL-GroES system forms a nano-cage that allows encapsulation of the non-native substrate proteins and provides a physical environment optimized to promote and accelerate protein folding. In Rickettsia bellii (strain OSU 85-389), this protein is Chaperonin GroEL.